The chain runs to 184 residues: ATP synthase subunit b, chloroplastic (184 aa).

Residues 27–49 (LATNPINLSVVFGVLIFFGKGVL) traverse the membrane as a helical segment.

This sequence belongs to the ATPase B chain family. In terms of assembly, F-type ATPases have 2 components, F(1) - the catalytic core - and F(0) - the membrane proton channel. F(1) has five subunits: alpha(3), beta(3), gamma(1), delta(1), epsilon(1). F(0) has four main subunits: a(1), b(1), b'(1) and c(10-14). The alpha and beta chains form an alternating ring which encloses part of the gamma chain. F(1) is attached to F(0) by a central stalk formed by the gamma and epsilon chains, while a peripheral stalk is formed by the delta, b and b' chains.

The protein resides in the plastid. Its subcellular location is the chloroplast thylakoid membrane. Functionally, f(1)F(0) ATP synthase produces ATP from ADP in the presence of a proton or sodium gradient. F-type ATPases consist of two structural domains, F(1) containing the extramembraneous catalytic core and F(0) containing the membrane proton channel, linked together by a central stalk and a peripheral stalk. During catalysis, ATP synthesis in the catalytic domain of F(1) is coupled via a rotary mechanism of the central stalk subunits to proton translocation. In terms of biological role, component of the F(0) channel, it forms part of the peripheral stalk, linking F(1) to F(0). This is ATP synthase subunit b, chloroplastic from Arabidopsis thaliana (Mouse-ear cress).